Reading from the N-terminus, the 152-residue chain is Transcriptional regulator MraZ (152 aa).

SpoVT-AbrB domains lie at 5–52 (ASAI…PIHE) and 81–124 (AHEC…DEAA).

It belongs to the MraZ family. In terms of assembly, forms oligomers.

The protein localises to the cytoplasm. It localises to the nucleoid. This is Transcriptional regulator MraZ from Shewanella pealeana (strain ATCC 700345 / ANG-SQ1).